Consider the following 207-residue polypeptide: Urease accessory protein UreG (207 aa).

16–23 (GPVGSGKT) is a binding site for GTP.

This sequence belongs to the SIMIBI class G3E GTPase family. UreG subfamily. As to quaternary structure, homodimer. UreD, UreF and UreG form a complex that acts as a GTP-hydrolysis-dependent molecular chaperone, activating the urease apoprotein by helping to assemble the nickel containing metallocenter of UreC. The UreE protein probably delivers the nickel.

Its subcellular location is the cytoplasm. In terms of biological role, facilitates the functional incorporation of the urease nickel metallocenter. This process requires GTP hydrolysis, probably effectuated by UreG. This chain is Urease accessory protein UreG, found in Cupriavidus metallidurans (strain ATCC 43123 / DSM 2839 / NBRC 102507 / CH34) (Ralstonia metallidurans).